We begin with the raw amino-acid sequence, 395 residues long: Nitrite extrusion protein (395 aa).

Transmembrane regions (helical) follow at residues 15–35 (SLVA…QITL), 44–64 (ISLV…PLGY), 73–93 (LMFM…SIAD), 96–116 (FDLI…SIGV), 133–153 (GIYG…PVIA), 160–180 (STVQ…VLFG), 203–223 (VLWF…AFTI), 240–262 (AGLR…GFLA), 271–291 (LMFV…SPTI), 293–313 (LYTF…GTVF), 330–350 (IVSA…ASVF), and 357–377 (AIGF…VIWM).

It belongs to the major facilitator superfamily. Nitrate/nitrite porter (TC 2.A.1.8) family.

It is found in the cell membrane. Its function is as follows. Involved in excretion of nitrite produced by the dissimilatory reduction of nitrate. In Bacillus subtilis (strain 168), this protein is Nitrite extrusion protein (narK).